The primary structure comprises 498 residues: ATP synthase subunit beta, chloroplastic (498 aa).

172-179 contributes to the ATP binding site; the sequence is GGAGVGKT.

The protein belongs to the ATPase alpha/beta chains family. In terms of assembly, F-type ATPases have 2 components, CF(1) - the catalytic core - and CF(0) - the membrane proton channel. CF(1) has five subunits: alpha(3), beta(3), gamma(1), delta(1), epsilon(1). CF(0) has four main subunits: a(1), b(1), b'(1) and c(9-12).

The protein resides in the plastid. It localises to the chloroplast thylakoid membrane. It catalyses the reaction ATP + H2O + 4 H(+)(in) = ADP + phosphate + 5 H(+)(out). In terms of biological role, produces ATP from ADP in the presence of a proton gradient across the membrane. The catalytic sites are hosted primarily by the beta subunits. The sequence is that of ATP synthase subunit beta, chloroplastic from Populus alba (White poplar).